Here is a 196-residue protein sequence, read N- to C-terminus: Glycerol-3-phosphate acyltransferase (196 aa).

Helical transmembrane passes span 4–24, 56–76, 80–100, 114–134, and 155–175; these read LTLT…AILV, ATVL…AYFL, SLYL…PIFF, TLLP…VLVV, and VYFL…LILF.

The protein belongs to the PlsY family. In terms of assembly, probably interacts with PlsX.

The protein resides in the cell inner membrane. It carries out the reaction an acyl phosphate + sn-glycerol 3-phosphate = a 1-acyl-sn-glycero-3-phosphate + phosphate. It participates in lipid metabolism; phospholipid metabolism. Its function is as follows. Catalyzes the transfer of an acyl group from acyl-phosphate (acyl-PO(4)) to glycerol-3-phosphate (G3P) to form lysophosphatidic acid (LPA). This enzyme utilizes acyl-phosphate as fatty acyl donor, but not acyl-CoA or acyl-ACP. This is Glycerol-3-phosphate acyltransferase from Colwellia psychrerythraea (strain 34H / ATCC BAA-681) (Vibrio psychroerythus).